A 901-amino-acid polypeptide reads, in one-letter code: Protein translocase subunit SecA (901 aa).

ATP-binding positions include glutamine 85, 103–107 (GEGKT), and aspartate 510. Positions 848–901 (RINQNNLPVDENSQTTQNSETEDYSDRRIGRNEPCPCGSGKKYKHCHGSRVARQ) are disordered. A compositionally biased stretch (polar residues) spans 849–866 (INQNNLPVDENSQTTQNS). 4 residues coordinate Zn(2+): cysteine 882, cysteine 884, cysteine 893, and histidine 894. Basic residues predominate over residues 888–901 (KKYKHCHGSRVARQ).

It belongs to the SecA family. As to quaternary structure, monomer and homodimer. Part of the essential Sec protein translocation apparatus which comprises SecA, SecYEG and auxiliary proteins SecDF-YajC and YidC. Zn(2+) serves as cofactor.

Its subcellular location is the cell inner membrane. The protein localises to the cytoplasm. It carries out the reaction ATP + H2O + cellular proteinSide 1 = ADP + phosphate + cellular proteinSide 2.. Functionally, part of the Sec protein translocase complex. Interacts with the SecYEG preprotein conducting channel. Has a central role in coupling the hydrolysis of ATP to the transfer of proteins into and across the cell membrane, serving both as a receptor for the preprotein-SecB complex and as an ATP-driven molecular motor driving the stepwise translocation of polypeptide chains across the membrane. The polypeptide is Protein translocase subunit SecA (Haemophilus influenzae (strain 86-028NP)).